The sequence spans 169 residues: 2-C-methyl-D-erythritol 2,4-cyclodiphosphate synthase (169 aa).

The a divalent metal cation site is built by D13 and H15. Residues 13-15 (DIH) and 40-41 (HS) each bind 4-CDP-2-C-methyl-D-erythritol 2-phosphate. H48 serves as a coordination point for a divalent metal cation. Residues 62–64 (DIG), 138–141 (TTNE), and R148 each bind 4-CDP-2-C-methyl-D-erythritol 2-phosphate.

It belongs to the IspF family. Homotrimer. It depends on a divalent metal cation as a cofactor.

It carries out the reaction 4-CDP-2-C-methyl-D-erythritol 2-phosphate = 2-C-methyl-D-erythritol 2,4-cyclic diphosphate + CMP. It functions in the pathway isoprenoid biosynthesis; isopentenyl diphosphate biosynthesis via DXP pathway; isopentenyl diphosphate from 1-deoxy-D-xylulose 5-phosphate: step 4/6. Functionally, involved in the biosynthesis of isopentenyl diphosphate (IPP) and dimethylallyl diphosphate (DMAPP), two major building blocks of isoprenoid compounds. Catalyzes the conversion of 4-diphosphocytidyl-2-C-methyl-D-erythritol 2-phosphate (CDP-ME2P) to 2-C-methyl-D-erythritol 2,4-cyclodiphosphate (ME-CPP) with a corresponding release of cytidine 5-monophosphate (CMP). In Akkermansia muciniphila (strain ATCC BAA-835 / DSM 22959 / JCM 33894 / BCRC 81048 / CCUG 64013 / CIP 107961 / Muc), this protein is 2-C-methyl-D-erythritol 2,4-cyclodiphosphate synthase.